The following is a 187-amino-acid chain: UPF0340 protein stu1894 (187 aa).

Belongs to the UPF0340 family.

The sequence is that of UPF0340 protein stu1894 from Streptococcus thermophilus (strain ATCC BAA-250 / LMG 18311).